We begin with the raw amino-acid sequence, 101 residues long: Urease subunit beta (101 aa).

Belongs to the urease beta subunit family. Heterotrimer of UreA (gamma), UreB (beta) and UreC (alpha) subunits. Three heterotrimers associate to form the active enzyme.

Its subcellular location is the cytoplasm. The catalysed reaction is urea + 2 H2O + H(+) = hydrogencarbonate + 2 NH4(+). It functions in the pathway nitrogen metabolism; urea degradation; CO(2) and NH(3) from urea (urease route): step 1/1. This is Urease subunit beta from Burkholderia ambifaria (strain MC40-6).